We begin with the raw amino-acid sequence, 205 residues long: Holliday junction branch migration complex subunit RuvA (205 aa).

The segment at 1–64 (MIGKLKGVID…EDQIKLFGFR (64 aa)) is domain I. Positions 65–143 (TDHEREWFRL…SFANVDPTVV (79 aa)) are domain II. The tract at residues 144-154 (HLAGDLDDQRA) is flexible linker. Positions 154-205 (APRPVRDAISALVNLGYGQPQATAAIAAASRGAGENAETAQLIRLGLKELSK) are domain III.

This sequence belongs to the RuvA family. In terms of assembly, homotetramer. Forms an RuvA(8)-RuvB(12)-Holliday junction (HJ) complex. HJ DNA is sandwiched between 2 RuvA tetramers; dsDNA enters through RuvA and exits via RuvB. An RuvB hexamer assembles on each DNA strand where it exits the tetramer. Each RuvB hexamer is contacted by two RuvA subunits (via domain III) on 2 adjacent RuvB subunits; this complex drives branch migration. In the full resolvosome a probable DNA-RuvA(4)-RuvB(12)-RuvC(2) complex forms which resolves the HJ.

Its subcellular location is the cytoplasm. In terms of biological role, the RuvA-RuvB-RuvC complex processes Holliday junction (HJ) DNA during genetic recombination and DNA repair, while the RuvA-RuvB complex plays an important role in the rescue of blocked DNA replication forks via replication fork reversal (RFR). RuvA specifically binds to HJ cruciform DNA, conferring on it an open structure. The RuvB hexamer acts as an ATP-dependent pump, pulling dsDNA into and through the RuvAB complex. HJ branch migration allows RuvC to scan DNA until it finds its consensus sequence, where it cleaves and resolves the cruciform DNA. The sequence is that of Holliday junction branch migration complex subunit RuvA from Nitrobacter winogradskyi (strain ATCC 25391 / DSM 10237 / CIP 104748 / NCIMB 11846 / Nb-255).